Consider the following 292-residue polypeptide: Elongation factor Ts (292 aa).

Positions 79-82 (TDFV) are involved in Mg(2+) ion dislocation from EF-Tu.

The protein belongs to the EF-Ts family.

Its subcellular location is the cytoplasm. Its function is as follows. Associates with the EF-Tu.GDP complex and induces the exchange of GDP to GTP. It remains bound to the aminoacyl-tRNA.EF-Tu.GTP complex up to the GTP hydrolysis stage on the ribosome. The chain is Elongation factor Ts from Xanthomonas axonopodis pv. citri (strain 306).